The chain runs to 431 residues: Protein translocase subunit SecY 1 (431 aa).

A run of 10 helical transmembrane segments spans residues isoleucine 18–glycine 38, tyrosine 67–leucine 87, tyrosine 115–leucine 135, valine 150–isoleucine 170, glycine 178–isoleucine 198, isoleucine 215–valine 235, valine 268–phenylalanine 288, glycine 312–valine 332, leucine 365–leucine 385, and leucine 392–glutamate 412.

Belongs to the SecY/SEC61-alpha family. As to quaternary structure, component of the Sec protein translocase complex. Heterotrimer consisting of SecY, SecE and SecG subunits. The heterotrimers can form oligomers, although 1 heterotrimer is thought to be able to translocate proteins. Interacts with the ribosome. Interacts with SecDF, and other proteins may be involved. Interacts with SecA.

Its subcellular location is the cell membrane. Its function is as follows. The central subunit of the protein translocation channel SecYEG. Consists of two halves formed by TMs 1-5 and 6-10. These two domains form a lateral gate at the front which open onto the bilayer between TMs 2 and 7, and are clamped together by SecE at the back. The channel is closed by both a pore ring composed of hydrophobic SecY resides and a short helix (helix 2A) on the extracellular side of the membrane which forms a plug. The plug probably moves laterally to allow the channel to open. The ring and the pore may move independently. The chain is Protein translocase subunit SecY 1 from Lactobacillus kefiranofaciens subsp. kefiranofaciens.